Here is a 623-residue protein sequence, read N- to C-terminus: uncharacterized protein (623 aa).

The segment covering 1 to 18 (MSSRSGSADTFTQRSDSN) has biased composition (polar residues). 7 disordered regions span residues 1–107 (MSSR…DPFT), 132–181 (LGSD…EIGA), 207–231 (SWNL…ADTD), 298–349 (REET…ESDQ), 384–464 (RKSV…DRNV), 533–553 (SIND…PPET), and 568–623 (VESR…TKGD). Residues 25-34 (ISLDDVRDNN) show a composition bias toward basic and acidic residues. A compositionally biased stretch (low complexity) spans 39-49 (SSSGISTTGSS). Polar residues predominate over residues 132–144 (LGSDTARPTSNGG). The span at 165-177 (STSTWGPSGPTTP) shows a compositional bias: low complexity. Positions 328–339 (EKSTFSRISEQP) are enriched in polar residues. The segment covering 400–417 (QTPTISTASSPIQPSSSP) has biased composition (low complexity). Positions 533–548 (SINDLQQGTSSSQNQA) are enriched in polar residues. Over residues 604-614 (PSASPSTSRTR) the composition is skewed to low complexity.

This is an uncharacterized protein from Emericella nidulans (strain FGSC A4 / ATCC 38163 / CBS 112.46 / NRRL 194 / M139) (Aspergillus nidulans).